Here is a 656-residue protein sequence, read N- to C-terminus: MTDPLIPAVLAFRANGTPFSPLYDDIYHSAVGGLEQAHYVFLRGNALPERWQERRVFTVVETGFGMGINFLVTWAAWRADSSRCERLHFVSTEKHPFTVDDLRKVYAATISDPEIAALAQALADAWPMLVPGTHRLEFEEGRVVLTLVFADAQDSVPALRLRADAFYLDGFAPARNPELWTSAIFKALARLAGEGATFATYSSAGDIKRALTQCGFEYRKVDGFGWKRAMLVGRFAPRWRVRRHEPPAPLVVDERHAVVIGTGLAGCAVIERLAARGWRVTSLERHAAVAQEASGNPAGVFHPMISRDDSVASRVTRTGFLYSLRHWAALERLGYGPSRGSKGLLQIAADDEEALSISQAIAAASYPSEYVTSVPADEAQRLAGMPLAHGGWFFPYGGWIDPASLCAAQCAAAGPLLERRFGVDVARIERAGGQWIVFDTAGQVVARAPVVIVASAHDAARIAGLQYAPTRSIRGQLTLLPAGTVRPPLELPVIGEGYAVPLANGATLTGATYELDDPDTSLRTDGHLENLARVAQMLPAFAGIVDRADPAALAGRVAFRCVTSDRMPMIGQLADETVAARDAQRLRGAWPLDLPRTDGLYGAFAYGSRGLVWAALGAELIASQLEGEPWPLERDLAEDIDPARFLLRALRQGTVS.

Residues 1-236 (MTDPLIPAVL…KRAMLVGRFA (236 aa)) are tRNA (mnm(5)s(2)U34)-methyltransferase. Residues 260–656 (IGTGLAGCAV…LRALRQGTVS (397 aa)) form an FAD-dependent cmnm(5)s(2)U34 oxidoreductase region.

The protein in the N-terminal section; belongs to the methyltransferase superfamily. tRNA (mnm(5)s(2)U34)-methyltransferase family. It in the C-terminal section; belongs to the DAO family. The cofactor is FAD.

The protein resides in the cytoplasm. It catalyses the reaction 5-aminomethyl-2-thiouridine(34) in tRNA + S-adenosyl-L-methionine = 5-methylaminomethyl-2-thiouridine(34) in tRNA + S-adenosyl-L-homocysteine + H(+). Catalyzes the last two steps in the biosynthesis of 5-methylaminomethyl-2-thiouridine (mnm(5)s(2)U) at the wobble position (U34) in tRNA. Catalyzes the FAD-dependent demodification of cmnm(5)s(2)U34 to nm(5)s(2)U34, followed by the transfer of a methyl group from S-adenosyl-L-methionine to nm(5)s(2)U34, to form mnm(5)s(2)U34. The polypeptide is tRNA 5-methylaminomethyl-2-thiouridine biosynthesis bifunctional protein MnmC (Paraburkholderia xenovorans (strain LB400)).